Here is a 96-residue protein sequence, read N- to C-terminus: Citrate lyase acyl carrier protein (96 aa).

O-(phosphoribosyl dephospho-coenzyme A)serine is present on Ser-14.

The protein belongs to the CitD family. As to quaternary structure, oligomer with a subunit composition of (alpha,beta,gamma)6.

The protein resides in the cytoplasm. Covalent carrier of the coenzyme of citrate lyase. The sequence is that of Citrate lyase acyl carrier protein from Lactiplantibacillus plantarum (strain ATCC BAA-793 / NCIMB 8826 / WCFS1) (Lactobacillus plantarum).